The sequence spans 448 residues: Homogentisate 1,2-dioxygenase (448 aa).

Residue His303 is the Proton acceptor of the active site. Positions 346 and 352 each coordinate Fe cation. Residues Tyr361 and His382 each coordinate homogentisate. His382 lines the Fe cation pocket.

Belongs to the homogentisate dioxygenase family. As to quaternary structure, hexamer; dimer of trimers. The cofactor is Fe cation.

It carries out the reaction homogentisate + O2 = 4-maleylacetoacetate + H(+). Its pathway is amino-acid degradation; L-phenylalanine degradation; acetoacetate and fumarate from L-phenylalanine: step 4/6. Its function is as follows. Involved in the catabolism of homogentisate (2,5-dihydroxyphenylacetate or 2,5-OH-PhAc), a central intermediate in the degradation of phenylalanine and tyrosine. Catalyzes the oxidative ring cleavage of the aromatic ring of homogentisate to yield maleylacetoacetate. The chain is Homogentisate 1,2-dioxygenase from Rhodopseudomonas palustris (strain BisB5).